The chain runs to 331 residues: NADH-quinone oxidoreductase subunit H (331 aa).

The next 9 membrane-spanning stretches (helical) occupy residues 5–25, 45–65, 78–98, 122–142, 156–176, 192–212, 245–265, 271–291, and 311–331; these read LFFV…MASL, GPDM…IKLF, FIFL…LAPV, VLYI…AGLA, VVAL…VVMV, IFNW…MASF, FFIG…LLFL, FLFI…FFFF, and WKIL…ALLI.

It belongs to the complex I subunit 1 family. As to quaternary structure, NDH-1 is composed of 14 different subunits. Subunits NuoA, H, J, K, L, M, N constitute the membrane sector of the complex.

The protein localises to the cell inner membrane. It carries out the reaction a quinone + NADH + 5 H(+)(in) = a quinol + NAD(+) + 4 H(+)(out). Functionally, NDH-1 shuttles electrons from NADH, via FMN and iron-sulfur (Fe-S) centers, to quinones in the respiratory chain. The immediate electron acceptor for the enzyme in this species is believed to be ubiquinone. Couples the redox reaction to proton translocation (for every two electrons transferred, four hydrogen ions are translocated across the cytoplasmic membrane), and thus conserves the redox energy in a proton gradient. This subunit may bind ubiquinone. The polypeptide is NADH-quinone oxidoreductase subunit H (Campylobacter concisus (strain 13826)).